The sequence spans 77 residues: Secapin (77 aa).

The signal sequence occupies residues 1-32 (MKNYSKNATHLITVLLFSFVVILLIIPSKCEA). A propeptide spanning residues 33–52 (VSNDMQPLEARSADLVPEPR) is cleaved from the precursor. C61 and C72 are joined by a disulfide.

The protein belongs to the secapin family. Expressed by the venom gland.

It localises to the secreted. In terms of biological role, serine protease inhibitor which exhibits antifibrinolytic, antielastolytic and antimicrobial activities. Displays antimicrobial activity against bacteria and fungi. Likely functions in the innate immune response to microbial infection and possibly in the venom, as an antifibrinolytic agent. Not toxic to mice but does induce slight sedation at higher doses (from 40 mg/kg). At a dose of 80 mg/kg, sedation occurs 15 minutes after injection and is accompanied by piloerection and hypothermia. This chain is Secapin, found in Apis mellifera (Honeybee).